Here is a 536-residue protein sequence, read N- to C-terminus: L-ornithine N(5)-monooxygenase SIDA (536 aa).

The disordered stretch occupies residues 1 to 25; it reads MSPHRETTGDESTTTTVPQNGTNGA. Residues 115 to 123 and Gln134 contribute to the FAD site; that span reads EKQTRFAWH. Residue Lys139 participates in L-ornithine binding. Position 200 (Val200) interacts with FAD. Arg310 is a binding site for NADP(+). L-ornithine contacts are provided by residues 324–327 and Asn354; that span reads NSIF. 515–517 serves as a coordination point for FAD; the sequence is TLL. Ser518 contributes to the L-ornithine binding site.

This sequence belongs to the lysine N(6)-hydroxylase/L-ornithine N(5)-oxygenase family. In terms of assembly, homotetramer. Requires FAD as cofactor.

It catalyses the reaction L-ornithine + NADH + O2 = N(5)-hydroxy-L-ornithine + NAD(+) + H2O. The catalysed reaction is L-ornithine + NADPH + O2 = N(5)-hydroxy-L-ornithine + NADP(+) + H2O. It participates in siderophore biosynthesis. L-ornithine N(5)-monooxygenase; part of the gene cluster that mediates the biosynthesis of at least 11 siderophores, including beauverichelin A, dimerumic acid (DA), Na-dimethyl coprogen (NADC), eleutherazine B, ferricrocin (FC), fusarinine A, fusarinine C (FsC), metachelin A, mevalonolactone, rhodotorulic acid (RA) and tenellin. This cocktail of siderophores for iron metabolism is essential for virulence, and more specifically for the fungal virulence in penetrating through the host cuticle. Siderophore synthesis is also involved in conidial germination under iron-deficient conditions. SIDA initiates the biosynthesis of these siderophores with the enzymatic hydroxylation of ornithine. SIDA is indispensable for the production of most siderophores including fusarinine C and ferricrocin but not mevalonolactone and eleutherazine B. However, SIDA mediates the metabolic interplay between synthesis of mevalonolactone and eleutherazine B and other siderophores. The sequence is that of L-ornithine N(5)-monooxygenase SIDA from Beauveria bassiana (strain ARSEF 2860) (White muscardine disease fungus).